We begin with the raw amino-acid sequence, 197 residues long: Peptide deformylase (197 aa).

2 residues coordinate Fe cation: cysteine 106 and histidine 148. The active site involves glutamate 149. Position 152 (histidine 152) interacts with Fe cation.

The protein belongs to the polypeptide deformylase family. Fe(2+) is required as a cofactor.

It carries out the reaction N-terminal N-formyl-L-methionyl-[peptide] + H2O = N-terminal L-methionyl-[peptide] + formate. Its function is as follows. Removes the formyl group from the N-terminal Met of newly synthesized proteins. Requires at least a dipeptide for an efficient rate of reaction. N-terminal L-methionine is a prerequisite for activity but the enzyme has broad specificity at other positions. The sequence is that of Peptide deformylase from Mycolicibacterium smegmatis (strain ATCC 700084 / mc(2)155) (Mycobacterium smegmatis).